The sequence spans 487 residues: 3-octaprenyl-4-hydroxybenzoate carboxy-lyase (487 aa).

Asn172 provides a ligand contact to Mn(2+). Prenylated FMN-binding positions include 175-177 (IYR), 189-191 (RWL), and 194-195 (RG). Glu238 is a Mn(2+) binding site. Asp287 (proton donor) is an active-site residue.

This sequence belongs to the UbiD family. Homohexamer. Requires prenylated FMN as cofactor. Mn(2+) is required as a cofactor.

It localises to the cell membrane. It catalyses the reaction a 4-hydroxy-3-(all-trans-polyprenyl)benzoate + H(+) = a 2-(all-trans-polyprenyl)phenol + CO2. Its pathway is cofactor biosynthesis; ubiquinone biosynthesis. Catalyzes the decarboxylation of 3-octaprenyl-4-hydroxy benzoate to 2-octaprenylphenol, an intermediate step in ubiquinone biosynthesis. The sequence is that of 3-octaprenyl-4-hydroxybenzoate carboxy-lyase from Blochmanniella pennsylvanica (strain BPEN).